The following is a 163-amino-acid chain: UPF0587 protein CG4646 (163 aa).

C33, C36, C68, and C71 together coordinate Zn(2+).

Belongs to the UPF0587 family.

This Drosophila melanogaster (Fruit fly) protein is UPF0587 protein CG4646.